Consider the following 281-residue polypeptide: Leukocyte antigen CD37 (281 aa).

At 1–17 (MSAQESCLSLIKYFLFV) the chain is on the cytoplasmic side. The chain crosses the membrane as a helical span at residues 18-38 (FNLFFFVLGSLIFCFGIWILI). Topologically, residues 39–59 (DKTSFVSFVGLAFVPLQIWSK) are extracellular. A helical transmembrane segment spans residues 60 to 74 (VLAISGIFTMGIALL). At 75–85 (GCVGALKELRC) the chain is on the cytoplasmic side. A helical membrane pass occupies residues 86-111 (LLGLYFGMLLLLFATQITLGILISTQ). Residues 112–241 (RAQLERSLRD…QGLQKWLHNN (130 aa)) are Extracellular-facing. N-linked (GlcNAc...) asparagine glycans are attached at residues asparagine 170, asparagine 183, and asparagine 188. The helical transmembrane segment at 242–266 (LISIVGICLGVGLLELGFMTLSIFL) threads the bilayer. Topologically, residues 267–281 (CRNLDHVYNRLARYR) are cytoplasmic.

The protein belongs to the tetraspanin (TM4SF) family. As to quaternary structure, interacts with SCIMP. Interacts with SOCS3. Interacts with DECTIN1/CLEC7A. Post-translationally, tyrosine phosphorylated; leading to activation of downstream signaling pathways. As to expression, B-lymphocytes. Antigen presenting cells.

The protein localises to the cell membrane. Structural component of specialized membrane microdomains known as tetraspanin-enriched microdomains (TERMs), which act as platforms for receptor clustering and signaling. Participates thereby in diverse biological functions such as cell signal transduction, adhesion, migration and protein trafficking. Upon ligand binding, two signaling pathways are activated, one acting through phosphorylation by LYN leading to cell death or a survival pathway with activation of GSK3B. Plays an essential role essential for clustering of integrin ITGA4/ITGB1 and promotes its mobility in the plasma membrane of B-cells. In turn, participates in ITGA4/ITGB1 integrin-mediated antiapoptotic signaling through AKT. Also plays a role in the migration of dendritic cells and neutrophils to draining lymph nodes, as well as in their integrin-mediated adhesion. Negatively regulates IL-6 responses through direct interaction with SOCS3 thereby preventing constitutive IL-6 signaling. Alternatively, inhibition of IL-6 signaling can also occur via interaction and stabilization of DECTIN1/CLEC7A at the cell membrane to inhibit its ability to promote the production of IL-6. This chain is Leukocyte antigen CD37 (CD37), found in Homo sapiens (Human).